A 287-amino-acid chain; its full sequence is Phosphatidylinositol transfer protein 5 (287 aa).

The disordered stretch occupies residues 252–287; sequence FHNNNNNNSNNSNNNNNNNTQPQRSSFFSRSTDGNK. Residues 254-270 show a composition bias toward low complexity; that stretch reads NNNNNNSNNSNNNNNNN. Residues 271–287 are compositionally biased toward polar residues; that stretch reads TQPQRSSFFSRSTDGNK.

This sequence belongs to the PtdIns transfer protein family. PI transfer class IIA subfamily.

Phosphatidylinositol transfer proteins mediate the monomeric transport of lipids by shielding a lipid from the aqueous environment and binding the lipid in a hydrophobic cavity. The protein is Phosphatidylinositol transfer protein 5 (pitE) of Dictyostelium discoideum (Social amoeba).